A 125-amino-acid chain; its full sequence is Holo-[acyl-carrier-protein] synthase (125 aa).

The Mg(2+) site is built by Asp8 and Glu55.

This sequence belongs to the P-Pant transferase superfamily. AcpS family. It depends on Mg(2+) as a cofactor.

It localises to the cytoplasm. The catalysed reaction is apo-[ACP] + CoA = holo-[ACP] + adenosine 3',5'-bisphosphate + H(+). Its function is as follows. Transfers the 4'-phosphopantetheine moiety from coenzyme A to a Ser of acyl-carrier-protein. This chain is Holo-[acyl-carrier-protein] synthase, found in Treponema pallidum (strain Nichols).